The chain runs to 597 residues: Elongation factor 4 (597 aa).

The tr-type G domain maps to 2–184 (DHIRNFSIIA…ALIAKVPPPK (183 aa)). GTP is bound by residues 14-19 (DHGKST) and 131-134 (NKID).

The protein belongs to the TRAFAC class translation factor GTPase superfamily. Classic translation factor GTPase family. LepA subfamily.

It localises to the cell inner membrane. It catalyses the reaction GTP + H2O = GDP + phosphate + H(+). In terms of biological role, required for accurate and efficient protein synthesis under certain stress conditions. May act as a fidelity factor of the translation reaction, by catalyzing a one-codon backward translocation of tRNAs on improperly translocated ribosomes. Back-translocation proceeds from a post-translocation (POST) complex to a pre-translocation (PRE) complex, thus giving elongation factor G a second chance to translocate the tRNAs correctly. Binds to ribosomes in a GTP-dependent manner. In Paraburkholderia phymatum (strain DSM 17167 / CIP 108236 / LMG 21445 / STM815) (Burkholderia phymatum), this protein is Elongation factor 4.